The primary structure comprises 571 residues: Phototropic-responsive NPH3 family protein NPY1 (571 aa).

In terms of domain architecture, BTB spans 29 to 97; it reads SDVTIHVGEV…CYGMTVTLNA (69 aa). One can recognise an NPH3 domain in the interval 210–468; sequence DWWVEDVCEL…VQVLYFEQLR (259 aa). Position 409 is a phosphotyrosine (Tyr-409). Residues 475–571 form a disordered region; that stretch reads ASVAASSHSP…SSRRRRHSIS (97 aa). Residues 484 to 504 are compositionally biased toward basic and acidic residues; that stretch reads PVEKTEENKGEEATKKVELSK. Residues 540–562 are compositionally biased toward low complexity; it reads SNKSSEVSSGSSQSPPAKSSSSS.

It belongs to the NPH3 family. Component of a complex made of PINs (e.g. PIN1 and PIN2), MAB4/MELs (e.g. NPY1/MAB4 and NPY5/MEL1) and AGC kinases (e.g. D6PK and PID) at the plasma membrane. Binds directly to PIN2 and PID. As to expression, accumulates in organ primordia such as cotyledons, leaves and floral organs. Expressed mainly in the apical regions of embryos including cotyledon tips and the apical meristem. Induced by the transcription factor ARF5/MP at the periphery of inflorescence meristems. Highly expressed in primary root tips and radicles.

The protein resides in the late endosome. The protein localises to the cell membrane. Its subcellular location is the cytoplasm. It localises to the cytosol. It functions in the pathway protein modification; protein ubiquitination. May act as a substrate-specific adapter of an E3 ubiquitin-protein ligase complex (CUL3-RBX1-BTB) which mediates the ubiquitination and subsequent proteasomal degradation of target proteins. Coregulates with PID the auxin-mediated plant organogenesis. Regulates basipetal PIN proteins (e.g. PIN1) polarization to establish inward auxin transport from the L1 surface of incipient organ primordia; this process is essential for the progression of flower organs development. Recruited to the plasma membrane by PINs (e.g. PIN1 and PIN2) and, in concert with AGC kinases-mediated (e.g. D6PK and PID) PINs phosphorylation, maintains their cell polarity (apical or basal) through limiting lateral diffusion-based escape. Induces auxin response in inner cell layers through a shift in PIN1 localization. Influences cotyledon development by regulating auxin distribution mainly in the protodermal cell layer. May play an essential role in root gravitropic responses. This chain is Phototropic-responsive NPH3 family protein NPY1, found in Arabidopsis thaliana (Mouse-ear cress).